The primary structure comprises 946 residues: Isoleucine--tRNA ligase (946 aa).

Positions 58–68 (PYANGSIHIGH) match the 'HIGH' region motif. Glutamate 568 is a binding site for L-isoleucyl-5'-AMP. Residues 609-613 (KMSKS) carry the 'KMSKS' region motif. Lysine 612 contributes to the ATP binding site. Zn(2+) contacts are provided by cysteine 908, cysteine 911, cysteine 928, and cysteine 931.

It belongs to the class-I aminoacyl-tRNA synthetase family. IleS type 1 subfamily. In terms of assembly, monomer. Zn(2+) serves as cofactor.

It is found in the cytoplasm. It carries out the reaction tRNA(Ile) + L-isoleucine + ATP = L-isoleucyl-tRNA(Ile) + AMP + diphosphate. Catalyzes the attachment of isoleucine to tRNA(Ile). As IleRS can inadvertently accommodate and process structurally similar amino acids such as valine, to avoid such errors it has two additional distinct tRNA(Ile)-dependent editing activities. One activity is designated as 'pretransfer' editing and involves the hydrolysis of activated Val-AMP. The other activity is designated 'posttransfer' editing and involves deacylation of mischarged Val-tRNA(Ile). In Chromohalobacter salexigens (strain ATCC BAA-138 / DSM 3043 / CIP 106854 / NCIMB 13768 / 1H11), this protein is Isoleucine--tRNA ligase.